The following is a 535-amino-acid chain: CTP synthase (535 aa).

Residues 1–267 form an amidoligase domain region; it reads MTKYIFVTGG…DKLVCEHMKL (267 aa). S13 is a binding site for CTP. Position 13 (S13) interacts with UTP. 14-19 is a binding site for ATP; the sequence is SLGKGI. Y54 is a binding site for L-glutamine. An ATP-binding site is contributed by D71. Mg(2+) is bound by residues D71 and E141. CTP contacts are provided by residues 148-150, 188-193, and K224; these read DIE and KTKPTQ. UTP is bound by residues 188–193 and K224; that span reads KTKPTQ. The region spanning 292-534 is the Glutamine amidotransferase type-1 domain; it reads TIGLVGKYVE…VGASLQASES (243 aa). G354 lines the L-glutamine pocket. The Nucleophile; for glutamine hydrolysis role is filled by C381. L-glutamine-binding positions include 382–385, E405, and R462; that span reads LGMQ. Residues H507 and E509 contribute to the active site.

The protein belongs to the CTP synthase family. Homotetramer.

It carries out the reaction UTP + L-glutamine + ATP + H2O = CTP + L-glutamate + ADP + phosphate + 2 H(+). It catalyses the reaction L-glutamine + H2O = L-glutamate + NH4(+). The catalysed reaction is UTP + NH4(+) + ATP = CTP + ADP + phosphate + 2 H(+). It functions in the pathway pyrimidine metabolism; CTP biosynthesis via de novo pathway; CTP from UDP: step 2/2. Its activity is regulated as follows. Allosterically activated by GTP, when glutamine is the substrate; GTP has no effect on the reaction when ammonia is the substrate. The allosteric effector GTP functions by stabilizing the protein conformation that binds the tetrahedral intermediate(s) formed during glutamine hydrolysis. Inhibited by the product CTP, via allosteric rather than competitive inhibition. In terms of biological role, catalyzes the ATP-dependent amination of UTP to CTP with either L-glutamine or ammonia as the source of nitrogen. Regulates intracellular CTP levels through interactions with the four ribonucleotide triphosphates. In Bacillus pumilus (strain SAFR-032), this protein is CTP synthase.